The primary structure comprises 305 residues: D-alanine--D-alanine ligase (305 aa).

The 193-residue stretch at 107 to 299 (KVIFASAGLK…FGELVLRILQ (193 aa)) folds into the ATP-grasp domain. 134-185 (PLPVVVKPSREGSSVGVGIVRDPSRMQAALDEAFRYDSEILIEGFIDGREVQ) lines the ATP pocket. The Mg(2+) site is built by Asp-253, Glu-266, and Asn-268.

The protein belongs to the D-alanine--D-alanine ligase family. The cofactor is Mg(2+). It depends on Mn(2+) as a cofactor.

Its subcellular location is the cytoplasm. The enzyme catalyses 2 D-alanine + ATP = D-alanyl-D-alanine + ADP + phosphate + H(+). The protein operates within cell wall biogenesis; peptidoglycan biosynthesis. Its function is as follows. Cell wall formation. In Citrifermentans bemidjiense (strain ATCC BAA-1014 / DSM 16622 / JCM 12645 / Bem) (Geobacter bemidjiensis), this protein is D-alanine--D-alanine ligase.